Reading from the N-terminus, the 185-residue chain is Elongation factor P (185 aa).

It belongs to the elongation factor P family.

It is found in the cytoplasm. It functions in the pathway protein biosynthesis; polypeptide chain elongation. In terms of biological role, involved in peptide bond synthesis. Stimulates efficient translation and peptide-bond synthesis on native or reconstituted 70S ribosomes in vitro. Probably functions indirectly by altering the affinity of the ribosome for aminoacyl-tRNA, thus increasing their reactivity as acceptors for peptidyl transferase. The protein is Elongation factor P of Oceanobacillus iheyensis (strain DSM 14371 / CIP 107618 / JCM 11309 / KCTC 3954 / HTE831).